The following is a 130-amino-acid chain: Ribosome-binding factor A (130 aa).

The tract at residues 111–130 (RDLDDVGPEATSSDEDAEQR) is disordered.

It belongs to the RbfA family. Monomer. Binds 30S ribosomal subunits, but not 50S ribosomal subunits or 70S ribosomes.

The protein resides in the cytoplasm. Its function is as follows. One of several proteins that assist in the late maturation steps of the functional core of the 30S ribosomal subunit. Associates with free 30S ribosomal subunits (but not with 30S subunits that are part of 70S ribosomes or polysomes). Required for efficient processing of 16S rRNA. May interact with the 5'-terminal helix region of 16S rRNA. The polypeptide is Ribosome-binding factor A (Xanthomonas euvesicatoria pv. vesicatoria (strain 85-10) (Xanthomonas campestris pv. vesicatoria)).